Reading from the N-terminus, the 389-residue chain is tRNA(Met) cytidine acetate ligase (389 aa).

ATP is bound by residues Ile8–Leu21, Gly97, Asn153, and Arg176.

It belongs to the TmcAL family.

It localises to the cytoplasm. The enzyme catalyses cytidine(34) in elongator tRNA(Met) + acetate + ATP = N(4)-acetylcytidine(34) in elongator tRNA(Met) + AMP + diphosphate. Catalyzes the formation of N(4)-acetylcytidine (ac(4)C) at the wobble position of elongator tRNA(Met), using acetate and ATP as substrates. First activates an acetate ion to form acetyladenylate (Ac-AMP) and then transfers the acetyl group to tRNA to form ac(4)C34. This Lactococcus lactis subsp. cremoris (strain SK11) protein is tRNA(Met) cytidine acetate ligase.